A 2442-amino-acid polypeptide reads, in one-letter code: Histone lysine acetyltransferase CREBBP (2442 aa).

Disordered regions lie at residues 1–40 and 74–168; these read MAENLLDGPPNPKRAKLSSPGFSANDSTDFGSLFDLENDL and RGGS…PATS. The residue at position 2 (alanine 2) is an N-acetylalanine. Positions 20-30 are enriched in polar residues; it reads PGFSANDSTDF. At serine 120 the chain carries Phosphoserine. Residues 125-168 show a composition bias toward polar residues; that stretch reads GDSSTPSLPKQAASTSGPTPPASQALNPQAQKQVGLVTSSPATS. Arginine 219 is subject to Omega-N-methylarginine. Positions 226–409 are interaction with SRCAP; it reads PAPAMQGATS…GKACQVAHCA (184 aa). The segment covering 261–272 has biased composition (low complexity); the sequence is GGMTKMGMTGNT. A disordered region spans residues 261-290; it reads GGMTKMGMTGNTSPFGQPFSQTGGQPMGAT. Polar residues predominate over residues 273–284; the sequence is SPFGQPFSQTGG. Residues 346 to 432 form a TAZ-type 1 zinc finger; it reads DPEKRKLIQQ…RHDCPVCLPL (87 aa). Residues histidine 362, cysteine 366, cysteine 379, cysteine 384, histidine 393, cysteine 397, cysteine 403, cysteine 408, histidine 417, cysteine 421, cysteine 426, and cysteine 429 each contribute to the Zn(2+) site. Positions 586–665 constitute a KIX domain; that stretch reads GVRKGWHEHV…KIYKIQKELE (80 aa). Asymmetric dimethylarginine is present on residues arginine 600 and arginine 624. Lysine 656 bears the N6-acetyllysine mark. Residues 792–825 show a composition bias toward polar residues; it reads FLPQNQFPSSSGAMSVNSVGMGQPATQAGVSQGQ. Positions 792-1084 are disordered; the sequence is FLPQNQFPSS…STSPSQPRKK (293 aa). Pro residues-rich tracts occupy residues 846–862 and 874–887; these read PCPPVTQSPLHPTPPPA and PTPPGMTPPQPAAP. The span at 894–906 shows a compositional bias: polar residues; sequence VSSGQTPTPTPGS. Composition is skewed to low complexity over residues 909–930 and 938–957; these read SAAQTQSTPTVQAAAQAQVTPQ and PSVATPQSSQQQPTPVHTQP. Over residues 974–989 the composition is skewed to polar residues; sequence PTPSSVTSAETSSQQP. Lysine 999 is covalently cross-linked (Glycyl lysine isopeptide (Lys-Gly) (interchain with G-Cter in SUMO1)). A compositionally biased stretch (basic and acidic residues) spans 1012 to 1022; the sequence is AESKGEPRSEM. Position 1015 is an N6-acetyllysine (lysine 1015). Serine 1031 bears the Phosphoserine mark. Over residues 1033 to 1060 the composition is skewed to basic and acidic residues; it reads VKEETDTTEQKSEPMEVEEKKPEVKVEA. Glycyl lysine isopeptide (Lys-Gly) (interchain with G-Cter in SUMO1) cross-links involve residues lysine 1034 and lysine 1057. Polar residues predominate over residues 1067-1080; that stretch reads SANGTASQSTSPSQ. A Phosphoserine modification is found at serine 1077. The 108-residue stretch at 1086 to 1193 folds into the Bromo domain; it reads FKPEELRQAL…EVFEQEIDPV (108 aa). The tract at residues 1125-1171 is interaction with histone; sequence DYFDIVKNPMDLSTIKRKLDTGQYQEPWQYVDDVWLMFNNAWLYNRK. The interval 1163 to 1181 is interaction with ASF1A; that stretch reads NNAWLYNRKTSRVYKFCSK. Lysine 1217 bears the N6-acetyllysine mark. Residues 1324-1701 enclose the CBP/p300-type HAT domain; sequence KFSAKRLQTT…MLVELHTQGQ (378 aa). A phosphoserine; by IKKA mark is found at serine 1383 and serine 1387. An interaction with histone region spans residues 1434–1436; sequence YLD. Acetyl-CoA contacts are provided by residues 1435 to 1437, 1447 to 1448, isoleucine 1494, arginine 1499, and tryptophan 1503; these read LDS and RT. A coiled-coil region spans residues 1548-1575; it reads NVLEESIKELEQEEEERKKEESTAASET. Positions 1557-1569 are enriched in basic and acidic residues; that stretch reads LEQEEEERKKEES. A disordered region spans residues 1557 to 1616; sequence LEQEEEERKKEESTAASETPEGSQGDSKNAKKKNNKKTNKNKSSISRANKKKPSMPNVSN. Residues lysine 1584, lysine 1592, lysine 1593, lysine 1596, and lysine 1598 each carry the N6-acetyllysine modification. Basic residues predominate over residues 1586–1596; sequence AKKKNNKKTNK. The ZZ-type zinc finger occupies 1703 to 1751; sequence RFVYTCNECKHHVETRWHCTVCEDYDLCINCYNTKSHTHKMVKWGLGLD. Zn(2+)-binding residues include cysteine 1708, cysteine 1711, cysteine 1721, cysteine 1724, cysteine 1730, cysteine 1733, histidine 1739, and histidine 1741. N6-acetyllysine is present on residues lysine 1742 and lysine 1745. Serine 1764 carries the phosphoserine modification. A TAZ-type 2 zinc finger spans residues 1766–1847; the sequence is QESRRLSIQR…KCPVPFCLNI (82 aa). The tract at residues 1875–1960 is disordered; it reads TRNVPQQSLP…QPPPAAVEAA (86 aa). Pro residues-rich tracts occupy residues 1901-1913 and 1944-1955; these read PQTPQPPAQPQPS and PAPPPPAQPPPA. Serine 2064, serine 2077, and serine 2080 each carry phosphoserine. Residues 2112-2421 are disordered; that stretch reads NQPGMQPQPG…LNTPNRSALS (310 aa). Composition is skewed to low complexity over residues 2113–2138, 2197–2217, 2261–2280, and 2287–2305; these read QPGMQPQPGLQSQPGMQPQPGMHQQP, QLLQHQQQQQQQQQQQQQQQQ, MGQMAAPMGQLGQMGQPGLG, and IQQALQQRILQQQQMKQQI. 2 stretches are compositionally biased toward polar residues: residues 2315–2327 and 2334–2343; these read SPQQHMLSGQPQA and QIATSLSNQV. Pro residues predominate over residues 2349-2372; the sequence is VQSPRPQSQPPHSSPSPRIQPQPS. The residue at position 2351 (serine 2351) is a Phosphoserine. Residues 2411–2421 show a composition bias toward polar residues; the sequence is QLNTPNRSALS.

As to quaternary structure, part of a complex composed of MSX3, CREBBP/CBP AND EP300/p300; the interaction with MSX3 decreases histone acetylation activity. Found in a complex containing NCOA2; NCOA3; IKKA; IKKB and IKBKG. Probably part of a complex with HIF1A and EP300. Interacts with phosphorylated CREB1. Interacts with the C-terminal region of CITED4. The TAZ-type 1 domain interacts with HIF1A. Interacts with SRCAP, CARM1, ELF3, MLLT7/FOXO4, N4BP2, NCOA1, NCOA3, NCOA6, PCAF, DDX5, DDX17, PELP1, PML, SMAD1, SMAD2, SMAD3, SPIB, TRERF1 and ZCCHC12. Interacts with KLF1; the interaction results in acetylation and enhancement of transcriptional activity of KLF1. Interacts with DAXX; the interaction is dependent on CBP sumoylation and results in suppression of the transcriptional activity via recruitment of HDAC2 to DAXX. Interacts with MAF. Interacts with MTDH. Interacts with MAFG; the interaction acetylates MAFG in the basic region and stimulates NFE2 transcriptional activity through increasing its DNA-binding activity. Interacts with IRF2; the interaction acetylates IRF2 and regulates its activity on the H4 promoter. Interacts (via N-terminus) with SS18L1/CREST (via C-terminus). Interacts with IRF3 (when phosphorylated); forming the dsRNA-activated factor 1 (DRAF1), a complex which activates the transcription of the type I interferon genes. Interacts with MECOM. Interacts with CITED1 (via C-terminus) Interacts with GATA1; the interaction results in acetylation and enhancement of transcriptional activity of GATA1. Interacts with FOXO1; the interaction acetylates FOXO1 and inhibits its transcriptional activity. Interacts with NPAS2, CLOCK and BMAL1. Interacts with ASF1A and ASF1B; this promotes histone acetylation. Interacts with acetylated TP53/p53 and with the acetylated histones H3 and H4. Interacts (via transactivation domain and C-terminus) with PCNA; the interaction occurs on chromatin in UV-irradiated damaged cells. Interacts with DHX9 (via N-terminus); this interaction mediates association with RNA polymerase II holoenzyme and stimulates CREB-dependent transcriptional activation. Interacts with SMAD4; negatively regulated by ZBTB7A. Forms a complex with KMT2A and CREB1. Interacts with DDX3X; this interaction may facilitate HNF4A acetylation. Interacts with MSX1; the interaction may inhibit MSX1 autoinactivation. Interacts with MSX3. Interacts with ACSS2. In terms of processing, methylation of the KIX domain by CARM1 blocks association with CREB. This results in the blockade of CREB signaling, and in activation of apoptotic response. Phosphorylated by CHUK/IKKA at Ser-1383 and Ser-1387; these phosphorylations promote cell growth by switching the binding preference of CREBBP from TP53 to NF-kappa-B. Post-translationally, sumoylation negatively regulates transcriptional activity via the recruitment of DAAX. In terms of processing, autoacetylation is required for binding to protein substrates, such as acetylated histones and acetylated TP53/p53. Autoacetylation is induced by glucose and fatty acids. Expressed in hypothalamus and cortex.

Its subcellular location is the cytoplasm. It is found in the nucleus. The catalysed reaction is L-lysyl-[histone] + acetyl-CoA = N(6)-acetyl-L-lysyl-[histone] + CoA + H(+). The enzyme catalyses L-lysyl-[protein] + acetyl-CoA = N(6)-acetyl-L-lysyl-[protein] + CoA + H(+). It carries out the reaction (S)-lactoyl-CoA + L-lysyl-[protein] = N(6)-[(S)-lactoyl]-L-lysyl-[protein] + CoA + H(+). Its function is as follows. Acetylates histones, giving a specific tag for transcriptional activation. Mediates acetylation of histone H3 at 'Lys-18' and 'Lys-27' (H3K18ac and H3K27ac, respectively). Also acetylates non-histone proteins, like DDX21, FBL, IRF2, MAFG, NCOA3, POLR1E/PAF53 and FOXO1. Binds specifically to phosphorylated CREB and enhances its transcriptional activity toward cAMP-responsive genes. Acts as a coactivator of ALX1. Acts as a circadian transcriptional coactivator which enhances the activity of the circadian transcriptional activators: NPAS2-BMAL1 and CLOCK-BMAL1 heterodimers. Acetylates PCNA; acetylation promotes removal of chromatin-bound PCNA and its degradation during nucleotide excision repair (NER). Acetylates POLR1E/PAF53, leading to decreased association of RNA polymerase I with the rDNA promoter region and coding region. Acetylates DDX21, thereby inhibiting DDX21 helicase activity. Acetylates FBL, preventing methylation of 'Gln-105' of histone H2A (H2AQ104me). In addition to protein acetyltransferase, can use different acyl-CoA substrates, such as lactoyl-CoA, and is able to mediate protein lactylation. Catalyzes lactylation of MRE11 in response to DNA damage, thereby promoting DNA double-strand breaks (DSBs) via homologous recombination (HR). Functions as a transcriptional coactivator for SMAD4 in the TGF-beta signaling pathway. The polypeptide is Histone lysine acetyltransferase CREBBP (Crebbp) (Rattus norvegicus (Rat)).